Reading from the N-terminus, the 1231-residue chain is Pesticidal crystal protein Cry1Bd (1231 aa).

This sequence belongs to the delta endotoxin family.

Its function is as follows. Promotes colloidosmotic lysis by binding to the midgut epithelial cells of lepidopteran larvae. Toxic to Plutella xylostella. This Bacillus thuringiensis subsp. wuhanensis protein is Pesticidal crystal protein Cry1Bd (cry1Bd).